Reading from the N-terminus, the 611-residue chain is Large ribosomal subunit assembly factor BipA (611 aa).

A tr-type G domain is found at 7–202 (KNLRNIAIIA…AIVKYTPPPT (196 aa)). GTP-binding positions include 19–24 (DHGKTT) and 132–135 (NKID).

The protein belongs to the TRAFAC class translation factor GTPase superfamily. Classic translation factor GTPase family. BipA subfamily. As to quaternary structure, monomer.

Its subcellular location is the cytoplasm. It carries out the reaction GTP + H2O = GDP + phosphate + H(+). Functionally, a 50S ribosomal subunit assembly protein with GTPase activity, required for 50S subunit assembly at low temperatures, may also play a role in translation. Binds GTP and analogs. Binds the 70S ribosome between the 30S and 50S subunits, in a similar position as ribosome-bound EF-G; it contacts a number of ribosomal proteins, both rRNAs and the A-site tRNA. This Buchnera aphidicola subsp. Baizongia pistaciae (strain Bp) protein is Large ribosomal subunit assembly factor BipA.